Reading from the N-terminus, the 301-residue chain is Methionine aminopeptidase (301 aa).

Residue H65 coordinates substrate. 3 residues coordinate a divalent metal cation: D85, D96, and H156. H164 provides a ligand contact to substrate. Residues E189 and E284 each coordinate a divalent metal cation.

Belongs to the peptidase M24A family. Methionine aminopeptidase archaeal type 2 subfamily. As to quaternary structure, monomer. Co(2+) is required as a cofactor. It depends on Zn(2+) as a cofactor. Requires Mn(2+) as cofactor. The cofactor is Fe(2+).

It carries out the reaction Release of N-terminal amino acids, preferentially methionine, from peptides and arylamides.. Its function is as follows. Removes the N-terminal methionine from nascent proteins. The N-terminal methionine is often cleaved when the second residue in the primary sequence is small and uncharged (Met-Ala-, Cys, Gly, Pro, Ser, Thr, or Val). The polypeptide is Methionine aminopeptidase (Saccharolobus solfataricus (strain ATCC 35092 / DSM 1617 / JCM 11322 / P2) (Sulfolobus solfataricus)).